We begin with the raw amino-acid sequence, 220 residues long: Transmembrane emp24 domain-containing protein 1 (220 aa).

Positions 1-19 (MAWSSSFLFIVLPLAAAVA) are cleaved as a signal peptide. Over 20-187 (VQPQDTELTF…LQDSNLERVN (168 aa)) the chain is Extracellular. Residues 36-118 (QECFYQTTLY…EKLVFFELIF (83 aa)) enclose the GOLD domain. A coiled-coil region spans residues 138 to 164 (ELLDIKLEDIKESIESVKSRLERSIQM). Residues 188 to 208 (FWSAINVGVLVTVAFLQVYML) form a helical membrane-spanning segment. Topologically, residues 209–220 (KSLFDDKRKIRT) are cytoplasmic. The COPII vesicle coat-binding signature appears at 211-212 (LF). The COPI vesicle coat-binding motif lies at 211–220 (LFDDKRKIRT).

The protein belongs to the EMP24/GP25L family. In terms of assembly, homodimer in endoplasmic reticulum, endoplasmic reticulum-Golgi intermediate compartment and cis-Golgi network. Interacts with IL1RL1. Interacts with RNF26; this interaction is important to modulate innate immune signaling through the cGAS-STING pathway.

Its subcellular location is the cell membrane. It is found in the endoplasmic reticulum membrane. It localises to the golgi apparatus. The protein localises to the cis-Golgi network membrane. The protein resides in the endoplasmic reticulum-Golgi intermediate compartment membrane. Potential role in vesicular protein trafficking, mainly in the early secretory pathway. May act as a cargo receptor at the lumenal side for incorporation of secretory cargo molecules into transport vesicles and may be involved in vesicle coat formation at the cytoplasmic side. Plays a positive role in IL-33-mediated IL-8 and IL-6 production by interacting with interleukin-33 receptor IL1RL1. Plays also a role in the modulation of innate immune signaling through the cGAS-STING pathway by interacting with RNF26. The polypeptide is Transmembrane emp24 domain-containing protein 1 (tmed1) (Xenopus tropicalis (Western clawed frog)).